Reading from the N-terminus, the 100-residue chain is Protein translation factor SUI1 homolog (100 aa).

This sequence belongs to the SUI1 family.

This is Protein translation factor SUI1 homolog from Thermoplasma volcanium (strain ATCC 51530 / DSM 4299 / JCM 9571 / NBRC 15438 / GSS1).